The following is a 380-amino-acid chain: Elongation factor Ts, mitochondrial (380 aa).

Belongs to the EF-Ts family.

The protein resides in the mitochondrion. Associates with the EF-Tu.GDP complex and induces the exchange of GDP to GTP. It remains bound to the aminoacyl-tRNA.EF-Tu.GTP complex up to the GTP hydrolysis stage on the ribosome. In Plasmodium chabaudi chabaudi, this protein is Elongation factor Ts, mitochondrial.